The sequence spans 884 residues: E3 SUMO-protein ligase SIZ1 (884 aa).

An SAP domain is found at Leu11–Leu45. The disordered stretch occupies residues Leu84–Pro103. The span at Gly88 to Leu97 shows a compositional bias: polar residues. A Glycyl lysine isopeptide (Lys-Gly) (interchain with G-Cter in SUMO) cross-link involves residue Lys100. The PHD-type zinc finger occupies Lys112–Thr168. The SP-RING-type zinc finger occupies Ser346 to His429. Zn(2+) is bound by residues Cys379, His381, Cys402, and Cys405. Residue Lys488 forms a Glycyl lysine isopeptide (Lys-Gly) (interchain with G-Cter in SUMO) linkage. Disordered regions lie at residues Pro753–Ser778, Gly792–Thr824, and Asp836–His869. 2 stretches are compositionally biased toward polar residues: residues Ser766–Ser778 and Ala803–Thr824. The span at Ser837–Ser847 shows a compositional bias: basic and acidic residues.

It belongs to the PIAS family. As to quaternary structure, interacts (via PHD domain) with SCE1, GTE3 and GTE5. Autosumoylated at Lys-100 and Lys-488. Ubiquitous.

The protein localises to the nucleus speckle. It functions in the pathway protein modification; protein sumoylation. Functionally, E3 SUMO protein ligase involved in regulation processes. Mediates SUMO/ attachment to PHR1, a MYB transcriptional activator controlling the phosphate deficiency responses. Functions as an upstream negative regulator of salicylic acid (SA) accumulation and subsequent SA-mediated systemic acquired resistance (SAR) signaling. Probably not involved in jasmonic acid (JA)-mediated defense response. Participates in abiotic stress-induced sumoylation. Controls heat shock-induced SUMO1 and SUMO2 conjugation and facilitates basal thermotolerance. Involved in freezing tolerance by mediating sumoylation of ICE1, a transcription activator of the cold signaling regulator CBF3/DREB1A. Acts as a positive regulator of drought stress tolerance. Acts as a floral repressor that promotes FLC expression by repressing FLD activity through sumoylation. Acts as a negative regulator of abscisic acid (ABA) signaling through ABI5 sumoylation. Mediates sumoylation of SCE1, GTE3 and GTE5. Functions as a negative regulator of SnRK1 signaling through sumoylation of several components of the SnRK1 complex. This is E3 SUMO-protein ligase SIZ1 from Arabidopsis thaliana (Mouse-ear cress).